The sequence spans 775 residues: 1,4-alpha-glucan branching enzyme GlgB (775 aa).

Residues 1-39 form a disordered region; that stretch reads MTSVHDFATATRPATPSAAAQEPAPALPPGLDRNTLDAL. Low complexity predominate over residues 8-24; the sequence is ATATRPATPSAAAQEPA. Asp454 functions as the Nucleophile in the catalytic mechanism. The active-site Proton donor is the Glu507.

The protein belongs to the glycosyl hydrolase 13 family. GlgB subfamily. In terms of assembly, monomer.

The enzyme catalyses Transfers a segment of a (1-&gt;4)-alpha-D-glucan chain to a primary hydroxy group in a similar glucan chain.. Its pathway is glycan biosynthesis; glycogen biosynthesis. In terms of biological role, catalyzes the formation of the alpha-1,6-glucosidic linkages in glycogen by scission of a 1,4-alpha-linked oligosaccharide from growing alpha-1,4-glucan chains and the subsequent attachment of the oligosaccharide to the alpha-1,6 position. This is 1,4-alpha-glucan branching enzyme GlgB from Ralstonia nicotianae (strain ATCC BAA-1114 / GMI1000) (Ralstonia solanacearum).